The following is a 471-amino-acid chain: Anthocyanidin 3-O-glucosyltransferase (471 aa).

His24 acts as the Proton acceptor in catalysis. Residue His24 participates in an anthocyanidin binding. Catalysis depends on Asp130, which acts as the Charge relay. Thr152 lines the UDP-alpha-D-glucose pocket. His161 is an an anthocyanidin binding site. 6 residues coordinate UDP-alpha-D-glucose: Ala352, Gln354, His369, Trp372, Ser374, and Glu377. Gly392 contacts an anthocyanidin. Residues Asp393 and Gln394 each contribute to the UDP-alpha-D-glucose site.

It belongs to the UDP-glycosyltransferase family.

It catalyses the reaction an anthocyanidin + UDP-alpha-D-glucose + H(+) = an anthocyanidin 3-O-beta-D-glucoside + UDP. It functions in the pathway pigment biosynthesis; anthocyanin biosynthesis. Functionally, in the presence of other necessary color factors, this glycosylation reaction allows the accumulation of anthocyanin pigments. The polypeptide is Anthocyanidin 3-O-glucosyltransferase (BZ1) (Zea mays (Maize)).